Here is a 552-residue protein sequence, read N- to C-terminus: 5'-AMP-activated protein kinase catalytic subunit alpha-2 (552 aa).

Residues 16–268 enclose the Protein kinase domain; sequence YVLGDTLGVG…IKDIREHEWF (253 aa). ATP-binding positions include 22–30 and lysine 45; that span reads LGVGTFGKV. Catalysis depends on aspartate 139, which acts as the Proton acceptor. Residue threonine 172 is modified to Phosphothreonine; by LKB1 and CaMKK2. Residue threonine 258 is modified to Phosphothreonine. Residues 291-376 are AIS; the sequence is EAVKEVCEKF…PERMPPLIAD (86 aa). Position 377 is a phosphoserine (serine 377). The disordered stretch occupies residues 478–519; sequence EQRSGSSTPQRSCSAAGLHRPRSSLDSVTAESHSLSGSLSGS. A compositionally biased stretch (polar residues) spans 480-490; it reads RSGSSTPQRSC. Serine 491 is modified (phosphoserine). Positions 509–519 are enriched in low complexity; sequence SHSLSGSLSGS.

This sequence belongs to the protein kinase superfamily. CAMK Ser/Thr protein kinase family. SNF1 subfamily. As to quaternary structure, AMPK is a heterotrimer of an alpha catalytic subunit (PRKAA1 or PRKAA2), a beta (PRKAB1 or PRKAB2) and a gamma non-catalytic subunits (PRKAG1, PRKAG2 or PRKAG3). Interacts with FNIP1 and FNIP2. Interacts with DUSP29. Interacts with ARF6. The phosphorylated form at Thr-172 mediated by CamKK2 interacts with ACSS2. Mg(2+) serves as cofactor. Post-translationally, ubiquitinated. Phosphorylated at Thr-172 by STK11/LKB1 in complex with STE20-related adapter-alpha (STRADA) pseudo kinase and CAB39. Also phosphorylated at Thr-172 by CAMKK2; triggered by a rise in intracellular calcium ions, without detectable changes in the AMP/ATP ratio. CAMKK1 can also phosphorylate Thr-172, but at much lower level. Dephosphorylated by protein phosphatase 2A and 2C (PP2A and PP2C). Phosphorylated by ULK1; leading to negatively regulate AMPK activity and suggesting the existence of a regulatory feedback loop between ULK1 and AMPK. Dephosphorylated by PPM1A and PPM1B at Thr-172 (mediated by STK11/LKB1).

The protein localises to the cytoplasm. Its subcellular location is the nucleus. It carries out the reaction L-seryl-[protein] + ATP = O-phospho-L-seryl-[protein] + ADP + H(+). It catalyses the reaction L-threonyl-[protein] + ATP = O-phospho-L-threonyl-[protein] + ADP + H(+). The enzyme catalyses L-seryl-[acetyl-CoA carboxylase] + ATP = O-phospho-L-seryl-[acetyl-CoA carboxylase] + ADP + H(+). The catalysed reaction is L-seryl-[3-hydroxy-3-methylglutaryl-coenzyme A reductase] + ATP = O-phospho-L-seryl-[3-hydroxy-3-methylglutaryl-coenzyme A reductase] + ADP + H(+). Its activity is regulated as follows. Activated by phosphorylation on Thr-172. Binding of AMP to non-catalytic gamma subunit (PRKAG1, PRKAG2 or PRKAG3) results in allosteric activation, inducing phosphorylation on Thr-172. AMP-binding to gamma subunit also sustains activity by preventing dephosphorylation of Thr-172. ADP also stimulates Thr-172 phosphorylation, without stimulating already phosphorylated AMPK. ATP promotes dephosphorylation of Thr-172, rendering the enzyme inactive. Under physiological conditions AMPK mainly exists in its inactive form in complex with ATP, which is much more abundant than AMP. Selectively inhibited by compound C (6-[4-(2-Piperidin-1-yl-ethoxy)-phenyl)]-3-pyridin-4-yl-pyyrazolo[1,5-a] pyrimidine. Activated by resveratrol, a natural polyphenol present in red wine, and S17834, a synthetic polyphenol. Salicylate/aspirin directly activates kinase activity, primarily by inhibiting Thr-172 dephosphorylation. Catalytic subunit of AMP-activated protein kinase (AMPK), an energy sensor protein kinase that plays a key role in regulating cellular energy metabolism. In response to reduction of intracellular ATP levels, AMPK activates energy-producing pathways and inhibits energy-consuming processes: inhibits protein, carbohydrate and lipid biosynthesis, as well as cell growth and proliferation. AMPK acts via direct phosphorylation of metabolic enzymes, and by longer-term effects via phosphorylation of transcription regulators. Regulates lipid synthesis by phosphorylating and inactivating lipid metabolic enzymes such as ACACA, ACACB, GYS1, HMGCR and LIPE; regulates fatty acid and cholesterol synthesis by phosphorylating acetyl-CoA carboxylase (ACACA and ACACB) and hormone-sensitive lipase (LIPE) enzymes, respectively. Promotes lipolysis of lipid droplets by mediating phosphorylation of isoform 1 of CHKA (CHKalpha2). Regulates insulin-signaling and glycolysis by phosphorylating IRS1, PFKFB2 and PFKFB3. Involved in insulin receptor/INSR internalization. AMPK stimulates glucose uptake in muscle by increasing the translocation of the glucose transporter SLC2A4/GLUT4 to the plasma membrane, possibly by mediating phosphorylation of TBC1D4/AS160. Regulates transcription and chromatin structure by phosphorylating transcription regulators involved in energy metabolism such as CRTC2/TORC2, FOXO3, histone H2B, HDAC5, MEF2C, MLXIPL/ChREBP, EP300, HNF4A, p53/TP53, SREBF1, SREBF2 and PPARGC1A. Acts as a key regulator of glucose homeostasis in liver by phosphorylating CRTC2/TORC2, leading to CRTC2/TORC2 sequestration in the cytoplasm. In response to stress, phosphorylates 'Ser-36' of histone H2B (H2BS36ph), leading to promote transcription. Acts as a key regulator of cell growth and proliferation by phosphorylating FNIP1, TSC2, RPTOR, WDR24 and ATG1/ULK1: in response to nutrient limitation, negatively regulates the mTORC1 complex by phosphorylating RPTOR component of the mTORC1 complex and by phosphorylating and activating TSC2. Also phosphorylates and inhibits GATOR2 subunit WDR24 in response to nutrient limitation, leading to suppress glucose-mediated mTORC1 activation. In response to energetic stress, phosphorylates FNIP1, inactivating the non-canonical mTORC1 signaling, thereby promoting nuclear translocation of TFEB and TFE3, and inducing transcription of lysosomal or autophagy genes. In response to nutrient limitation, promotes autophagy by phosphorylating and activating ATG1/ULK1. In that process also activates WDR45/WIPI4. Phosphorylates CASP6, thereby preventing its autoprocessing and subsequent activation. AMPK also acts as a regulator of circadian rhythm by mediating phosphorylation of CRY1, leading to destabilize it. May regulate the Wnt signaling pathway by phosphorylating CTNNB1, leading to stabilize it. Also acts as a regulator of cellular polarity by remodeling the actin cytoskeleton; probably by indirectly activating myosin. Also phosphorylates CFTR, EEF2K, KLC1, NOS3 and SLC12A1. Plays an important role in the differential regulation of pro-autophagy (composed of PIK3C3, BECN1, PIK3R4 and UVRAG or ATG14) and non-autophagy (composed of PIK3C3, BECN1 and PIK3R4) complexes, in response to glucose starvation. Can inhibit the non-autophagy complex by phosphorylating PIK3C3 and can activate the pro-autophagy complex by phosphorylating BECN1. Upon glucose starvation, promotes ARF6 activation in a kinase-independent manner leading to cell migration. Upon glucose deprivation mediates the phosphorylation of ACSS2 at 'Ser-659', which exposes the nuclear localization signal of ACSS2, required for its interaction with KPNA1 and nuclear translocation. Upon stress, regulates mitochondrial fragmentation through phosphorylation of MTFR1L. This Sus scrofa (Pig) protein is 5'-AMP-activated protein kinase catalytic subunit alpha-2 (PRKAA2).